The primary structure comprises 663 residues: Transmembrane 9 superfamily member 2 (663 aa).

The first 28 residues, 1–28 (MSARLPVLSPPRWPRLLLLSLLLLGAVP), serve as a signal peptide directing secretion. Over 29-300 (GPRRSGGFYL…LESMPHTHIQ (272 aa)) the chain is Lumenal. A helical transmembrane segment spans residues 301–321 (WFSIMNSLVIVLFLSGMVAMI). The Cytoplasmic portion of the chain corresponds to 322-374 (MLRTLHKDIARYNQMDSTEDAQEEFGWKLVHGDIFRPPRKGMLLSVFLGSGTQ). Residues 375 to 395 (ILIMTFVTLFFACLGFLSPAN) traverse the membrane as a helical segment. Residues 396–398 (RGA) lie on the Lumenal side of the membrane. Residues 399–419 (LMTCAVVLWVLLGTPAGYVAA) traverse the membrane as a helical segment. The Cytoplasmic segment spans residues 420–437 (RFYKSFGGEKWKTNVLLT). A helical membrane pass occupies residues 438–458 (SFLCPGIVFADFFIMNLILWG). The Lumenal segment spans residues 459 to 466 (EGSSAAIP). The helical transmembrane segment at 467–487 (FGTLVAILALWFCISVPLTFI) threads the bilayer. The Cytoplasmic segment spans residues 488–522 (GAYFGFKKNAIEHPVRTNQIPRQIPEQSFYTKPLP). The chain crosses the membrane as a helical span at residues 523 to 543 (GIIMGGILPFGCIFIQLFFIL). Topologically, residues 544 to 554 (NSIWSHQMYYM) are lumenal. Residues 555-575 (FGFLFLVFIILVITCSEATIL) form a helical membrane-spanning segment. The Cytoplasmic segment spans residues 576-591 (LCYFHLCAEDYHWQWR). Residues 592 to 612 (SFLTSGFTAVYFLIYAVHYFF) form a helical membrane-spanning segment. Residues 613-631 (SKLQITGTASTILYFGYTM) lie on the Lumenal side of the membrane. Residues 632–652 (IMVLIFFLFTGTIGFFACFWF) form a helical membrane-spanning segment. Topologically, residues 653-663 (VTKIYSVVKVD) are cytoplasmic.

This sequence belongs to the nonaspanin (TM9SF) (TC 9.A.2) family.

It localises to the endosome membrane. Its subcellular location is the golgi outpost. The protein localises to the cytoplasm. The protein resides in the cytoskeleton. It is found in the microtubule organizing center. In the intracellular compartments, may function as a channel or small molecule transporter. In Pongo abelii (Sumatran orangutan), this protein is Transmembrane 9 superfamily member 2 (TM9SF2).